A 407-amino-acid polypeptide reads, in one-letter code: Eukaryotic initiation factor 4A-II (407 aa).

The tract at residues 1–22 is disordered; it reads MSGGSADYNREHGGPEGMDPDG. The Q motif motif lies at 33 to 61; that stretch reads DNFDDMNLKESLLRGIYAYGFEKPSAIQQ. In terms of domain architecture, Helicase ATP-binding spans 64–235; it reads IIPCIKGYDV…KKFMRDPIRI (172 aa). Residue 77-84 participates in ATP binding; that stretch reads AQSGTGKT. Thr-159 bears the Phosphothreonine mark. Positions 183-186 match the DEAD box motif; it reads DEAD. The Helicase C-terminal domain maps to 246-407; the sequence is GIKQFYINVE…EMPMNVADLI (162 aa).

Belongs to the DEAD box helicase family. eIF4A subfamily. As to quaternary structure, eIF4F is a multi-subunit complex, the composition of which varies with external and internal environmental conditions. It is composed of at least EIF4A, EIF4E and EIF4G1/EIFFG3. Interacts with EIF4E. May interact with NOM1.

The catalysed reaction is ATP + H2O = ADP + phosphate + H(+). ATP-dependent RNA helicase which is a subunit of the eIF4F complex involved in cap recognition and is required for mRNA binding to ribosome. In the current model of translation initiation, eIF4A unwinds RNA secondary structures in the 5'-UTR of mRNAs which is necessary to allow efficient binding of the small ribosomal subunit, and subsequent scanning for the initiator codon. This is Eukaryotic initiation factor 4A-II (EIF4A2) from Bos taurus (Bovine).